The sequence spans 349 residues: Probable dual-specificity RNA methyltransferase RlmN (349 aa).

The active-site Proton acceptor is Glu-93. Residues 99–329 enclose the Radical SAM core domain; it reads YKHGNTICVS…TTIRREMGSD (231 aa). Cys-106 and Cys-334 form a disulfide bridge. [4Fe-4S] cluster contacts are provided by Cys-113, Cys-117, and Cys-120. S-adenosyl-L-methionine contacts are provided by residues 160-161, Ser-192, 215-217, and Asn-291; these read GE and SLH. Cys-334 (S-methylcysteine intermediate) is an active-site residue.

Belongs to the radical SAM superfamily. RlmN family. It depends on [4Fe-4S] cluster as a cofactor.

The protein resides in the cytoplasm. The catalysed reaction is adenosine(2503) in 23S rRNA + 2 reduced [2Fe-2S]-[ferredoxin] + 2 S-adenosyl-L-methionine = 2-methyladenosine(2503) in 23S rRNA + 5'-deoxyadenosine + L-methionine + 2 oxidized [2Fe-2S]-[ferredoxin] + S-adenosyl-L-homocysteine. It carries out the reaction adenosine(37) in tRNA + 2 reduced [2Fe-2S]-[ferredoxin] + 2 S-adenosyl-L-methionine = 2-methyladenosine(37) in tRNA + 5'-deoxyadenosine + L-methionine + 2 oxidized [2Fe-2S]-[ferredoxin] + S-adenosyl-L-homocysteine. Specifically methylates position 2 of adenine 2503 in 23S rRNA and position 2 of adenine 37 in tRNAs. The chain is Probable dual-specificity RNA methyltransferase RlmN from Clostridium tetani (strain Massachusetts / E88).